We begin with the raw amino-acid sequence, 206 residues long: Small ribosomal subunit protein uS4A (206 aa).

Residues 98 to 163 (MRLDNVVYRL…SERFKMFAEN (66 aa)) enclose the S4 RNA-binding domain.

Belongs to the universal ribosomal protein uS4 family. Part of the 30S ribosomal subunit. Contacts protein S5. The interaction surface between S4 and S5 is involved in control of translational fidelity.

One of the primary rRNA binding proteins, it binds directly to 16S rRNA where it nucleates assembly of the body of the 30S subunit. Functionally, with S5 and S12 plays an important role in translational accuracy. The chain is Small ribosomal subunit protein uS4A from Clostridium perfringens (strain ATCC 13124 / DSM 756 / JCM 1290 / NCIMB 6125 / NCTC 8237 / Type A).